Here is a 184-residue protein sequence, read N- to C-terminus: F(420)H(2) dehydrogenase subunit B (184 aa).

Residues 1–20 (MGEVKETKTNNSKENPEEEV) form a disordered region. 4 residues coordinate [4Fe-4S] cluster: cysteine 61, cysteine 62, cysteine 126, and cysteine 156.

It belongs to the complex I 20 kDa subunit family. The FPO complex is composed of at least 13 different subunits. It depends on FAD as a cofactor. The cofactor is [4Fe-4S] cluster.

It is found in the cell inner membrane. It carries out the reaction methanophenazine + reduced coenzyme F420-(gamma-L-Glu)(n) = dihydromethanophenazine + oxidized coenzyme F420-(gamma-L-Glu)(n) + H(+). Functionally, component of the F(420)H(2) dehydrogenase (FPO complex) which is part of the energy-conserving F(420)H(2):heterodisulfide oxidoreductase system. The membrane-bound electron transfer system of the complex plays an important role in the metabolism of methylotrophic methanogens when the organisms grow on methanol or methylamines. Catalyzes the oxidation of methanophenazine to dihydromethanophenazine. It shuttles electrons from F(420)H(2), via FAD and iron-sulfur (Fe-S) centers, to methanophenazine (an electron carrier in the membrane). It couples the redox reaction to proton translocation (for every two electrons transferred, two hydrogen ions are translocated across the cytoplasmic membrane), and thus conserves the redox energy in a proton gradient. It also catalyzes the oxidation of F(420)H(2) with quinones such as 2,3-dimethyl-1,4-naphthoquinone, 2-methyl-1,4-naphthoquinone and tetramethyl-p-benzoquinone. The chain is F(420)H(2) dehydrogenase subunit B (fpoB) from Methanosarcina mazei (strain ATCC BAA-159 / DSM 3647 / Goe1 / Go1 / JCM 11833 / OCM 88) (Methanosarcina frisia).